Here is a 256-residue protein sequence, read N- to C-terminus: Flap endonuclease Xni (256 aa).

Aspartate 105 lines the Mg(2+) pocket. The region spanning 163–256 is the 5'-3' exonuclease domain; sequence RSQLIDYLAL…QFRIKKPDSE (94 aa). K(+) contacts are provided by leucine 172, alanine 173, proline 181, valine 183, and isoleucine 186. The interval 185–190 is interaction with DNA; it reads GIGPKS.

It belongs to the Xni family. The cofactor is Mg(2+). K(+) serves as cofactor.

Its function is as follows. Has flap endonuclease activity. During DNA replication, flap endonucleases cleave the 5'-overhanging flap structure that is generated by displacement synthesis when DNA polymerase encounters the 5'-end of a downstream Okazaki fragment. In Shewanella pealeana (strain ATCC 700345 / ANG-SQ1), this protein is Flap endonuclease Xni.